Here is a 427-residue protein sequence, read N- to C-terminus: Serine--tRNA ligase (427 aa).

Position 233–235 (233–235 (TAE)) interacts with L-serine. 264-266 (RSE) is an ATP binding site. Glu-287 serves as a coordination point for L-serine. ATP is bound at residue 351–354 (EISS). L-serine is bound at residue Ser-386.

The protein belongs to the class-II aminoacyl-tRNA synthetase family. Type-1 seryl-tRNA synthetase subfamily. In terms of assembly, homodimer. The tRNA molecule binds across the dimer.

It localises to the cytoplasm. It carries out the reaction tRNA(Ser) + L-serine + ATP = L-seryl-tRNA(Ser) + AMP + diphosphate + H(+). The enzyme catalyses tRNA(Sec) + L-serine + ATP = L-seryl-tRNA(Sec) + AMP + diphosphate + H(+). It participates in aminoacyl-tRNA biosynthesis; selenocysteinyl-tRNA(Sec) biosynthesis; L-seryl-tRNA(Sec) from L-serine and tRNA(Sec): step 1/1. In terms of biological role, catalyzes the attachment of serine to tRNA(Ser). Is also able to aminoacylate tRNA(Sec) with serine, to form the misacylated tRNA L-seryl-tRNA(Sec), which will be further converted into selenocysteinyl-tRNA(Sec). This Dechloromonas aromatica (strain RCB) protein is Serine--tRNA ligase.